Consider the following 79-residue polypeptide: Conotoxin VnMKLT1-01121 (79 aa).

A signal peptide spans 1–22; it reads MKLTCMMIVAVLFLTAWTFVTA. Positions 23 to 48 are excised as a propeptide; sequence DDSRNGLEYLFPKAHYEMNPEASKLN. 3 disulfides stabilise this stretch: Cys53–Cys70, Cys60–Cys74, and Cys69–Cys78.

This sequence belongs to the conotoxin O1 superfamily. Expressed by the venom duct.

Its subcellular location is the secreted. The polypeptide is Conotoxin VnMKLT1-01121 (Conus ventricosus (Mediterranean cone)).